A 131-amino-acid chain; its full sequence is MATVPTRSGSPRQLTTKQTGDAWEAQARRWLEGKGLRFIAANVNERGGEIDLIMREGRTTVFIEVRYRRSALYGGAAASVTRSKQHKLLQTARLWLARHNGSFDTVDCRFDVVAFTGNEVEWIKDAFNDHS.

Over residues 1–19 (MATVPTRSGSPRQLTTKQT) the composition is skewed to polar residues. The interval 1-21 (MATVPTRSGSPRQLTTKQTGD) is disordered.

This sequence belongs to the UPF0102 family.

The sequence is that of UPF0102 protein YraN from Escherichia coli O45:K1 (strain S88 / ExPEC).